The chain runs to 76 residues: Small ribosomal subunit protein bS18 (76 aa).

It belongs to the bacterial ribosomal protein bS18 family. As to quaternary structure, part of the 30S ribosomal subunit. Forms a tight heterodimer with protein bS6.

Functionally, binds as a heterodimer with protein bS6 to the central domain of the 16S rRNA, where it helps stabilize the platform of the 30S subunit. This is Small ribosomal subunit protein bS18 from Symbiobacterium thermophilum (strain DSM 24528 / JCM 14929 / IAM 14863 / T).